The primary structure comprises 197 residues: Shikimate kinase (197 aa).

15-20 (GSGKSS) contributes to the ATP binding site. Ser-19 serves as a coordination point for Mg(2+). Substrate is bound by residues Asp-37, Arg-61, and Gly-83. Arg-121 is a binding site for ATP. Arg-148 provides a ligand contact to substrate.

Belongs to the shikimate kinase family. As to quaternary structure, monomer. The cofactor is Mg(2+).

Its subcellular location is the cytoplasm. It carries out the reaction shikimate + ATP = 3-phosphoshikimate + ADP + H(+). It functions in the pathway metabolic intermediate biosynthesis; chorismate biosynthesis; chorismate from D-erythrose 4-phosphate and phosphoenolpyruvate: step 5/7. Functionally, catalyzes the specific phosphorylation of the 3-hydroxyl group of shikimic acid using ATP as a cosubstrate. This chain is Shikimate kinase, found in Chlorobium phaeovibrioides (strain DSM 265 / 1930) (Prosthecochloris vibrioformis (strain DSM 265)).